Here is a 1099-residue protein sequence, read N- to C-terminus: Probable inorganic carbon transporter subunit DabA (1099 aa).

Residues 175–194 (RQGRRRFATTERRTRRTRRS) form a disordered region. Positions 176–194 (QGRRRFATTERRTRRTRRS) are enriched in basic residues. 4 residues coordinate Zn(2+): C514, D516, H722, and C737. Positions 1071–1099 (AGAGAAQPTRDAIELPEQASGPLPARDGQ) are disordered.

It belongs to the inorganic carbon transporter (TC 9.A.2) DabA family. As to quaternary structure, forms a complex with DabB. It depends on Zn(2+) as a cofactor.

The protein resides in the cell membrane. Its function is as follows. Part of an energy-coupled inorganic carbon pump. The protein is Probable inorganic carbon transporter subunit DabA of Parafrankia sp. (strain EAN1pec).